The chain runs to 86 residues: Large ribosomal subunit protein bL31B (86 aa).

This sequence belongs to the bacterial ribosomal protein bL31 family. Type B subfamily. In terms of assembly, part of the 50S ribosomal subunit.

The sequence is that of Large ribosomal subunit protein bL31B from Cupriavidus necator (strain ATCC 17699 / DSM 428 / KCTC 22496 / NCIMB 10442 / H16 / Stanier 337) (Ralstonia eutropha).